Consider the following 541-residue polypeptide: Alpha-zingiberene synthase (541 aa).

Residues Asp-296, Asp-300, Asp-437, Thr-441, and Glu-445 each contribute to the Mg(2+) site. The DDXXD motif motif lies at 296-300 (DDIYD).

It belongs to the terpene synthase family. It depends on Mg(2+) as a cofactor. Mn(2+) serves as cofactor.

The catalysed reaction is (2E,6E)-farnesyl diphosphate = alpha-zingiberene + diphosphate. It participates in secondary metabolite biosynthesis; terpenoid biosynthesis. Functionally, sesquiterpene synthase that catalyzes the formation of alpha-zingiberene and other sesquiterpenes from trans,trans-farnesyl diphosphate (FPP). May have an additional monoterpene synthase activity. This chain is Alpha-zingiberene synthase (ZIS), found in Ocimum basilicum (Sweet basil).